Consider the following 254-residue polypeptide: Type II methyl-directed restriction enzyme DpnI (254 aa).

Belongs to the DpnI type II restriction endonuclease family.

The enzyme catalyses Endonucleolytic cleavage of DNA to give specific double-stranded fragments with terminal 5'-phosphates.. Its function is as follows. An M and P subtype restriction enzyme that recognizes the double-stranded, methylated sequence 5'-G(Me)ATC-3' and cleaves after A-2. The protein is Type II methyl-directed restriction enzyme DpnI of Streptococcus pneumoniae serotype 4 (strain ATCC BAA-334 / TIGR4).